A 206-amino-acid chain; its full sequence is Ribosomal RNA large subunit methyltransferase E (206 aa).

Gly-61, Trp-63, Asp-81, Asp-97, and Asp-122 together coordinate S-adenosyl-L-methionine. Lys-162 acts as the Proton acceptor in catalysis.

This sequence belongs to the class I-like SAM-binding methyltransferase superfamily. RNA methyltransferase RlmE family.

Its subcellular location is the cytoplasm. It catalyses the reaction uridine(2552) in 23S rRNA + S-adenosyl-L-methionine = 2'-O-methyluridine(2552) in 23S rRNA + S-adenosyl-L-homocysteine + H(+). In terms of biological role, specifically methylates the uridine in position 2552 of 23S rRNA at the 2'-O position of the ribose in the fully assembled 50S ribosomal subunit. In Neisseria meningitidis serogroup C (strain 053442), this protein is Ribosomal RNA large subunit methyltransferase E.